The following is a 96-amino-acid chain: MEYKDPMHELLSSLEQIVFKDETQKITLTHRTTSCTEIEQLRKGTGLKIDDFARVLGVSVAMVKEWESRRVKPSSAELKLMRLIQANPALSKQLME.

The HTH cro/C1-type domain occupies Ile38–Ser91. A DNA-binding region (H-T-H motif) is located at residues Ile49–Ser68.

This is an uncharacterized protein from Escherichia coli O157:H7.